Here is a 1180-residue protein sequence, read N- to C-terminus: RecBCD enzyme subunit RecB (1180 aa).

A DNA-binding and helicase activity, interacts with RecC region spans residues 1–852 (MITTIPKSIN…QSGKNHISTK (852 aa)). One can recognise a UvrD-like helicase ATP-binding domain in the interval 3-448 (TTIPKSINVT…YFLDTNWRSS (446 aa)). Residue 24–31 (ASAGTGKT) participates in ATP binding. Residues 478 to 745 (SSRINKTTKF…KIVSIHKSKG (268 aa)) enclose the UvrD-like helicase C-terminal domain. Residues 905–1180 (NYNFTSYSQL…EIIKKLEQIF (276 aa)) are nuclease activity, interacts with RecD and RecA. Mg(2+) contacts are provided by H964, D1075, and D1088. D1088 functions as the For nuclease activity in the catalytic mechanism.

Belongs to the helicase family. UvrD subfamily. Heterotrimer of RecB, RecC and RecD. All subunits contribute to DNA-binding. Interacts with RecA. It depends on Mg(2+) as a cofactor.

It carries out the reaction Exonucleolytic cleavage (in the presence of ATP) in either 5'- to 3'- or 3'- to 5'-direction to yield 5'-phosphooligonucleotides.. The catalysed reaction is Couples ATP hydrolysis with the unwinding of duplex DNA by translocating in the 3'-5' direction.. The enzyme catalyses ATP + H2O = ADP + phosphate + H(+). Functionally, a helicase/nuclease that prepares dsDNA breaks (DSB) for recombinational DNA repair. Binds to DSBs and unwinds DNA via a highly rapid and processive ATP-dependent bidirectional helicase activity. Unwinds dsDNA until it encounters a Chi (crossover hotspot instigator) sequence from the 3' direction. Cuts ssDNA a few nucleotides 3' to the Chi site. The properties and activities of the enzyme are changed at Chi. The Chi-altered holoenzyme produces a long 3'-ssDNA overhang and facilitates RecA-binding to the ssDNA for homologous DNA recombination and repair. Holoenzyme degrades any linearized DNA that is unable to undergo homologous recombination. In the holoenzyme this subunit contributes ATPase, 3'-5' helicase, exonuclease activity and loads RecA onto ssDNA. The polypeptide is RecBCD enzyme subunit RecB (Buchnera aphidicola subsp. Baizongia pistaciae (strain Bp)).